The sequence spans 117 residues: Putative membrane protein insertion efficiency factor (117 aa).

This sequence belongs to the UPF0161 family.

The protein resides in the cell inner membrane. In terms of biological role, could be involved in insertion of integral membrane proteins into the membrane. The protein is Putative membrane protein insertion efficiency factor of Bartonella henselae (strain ATCC 49882 / DSM 28221 / CCUG 30454 / Houston 1) (Rochalimaea henselae).